We begin with the raw amino-acid sequence, 114 residues long: T cell receptor beta variable 19 (114 aa).

An N-terminal signal peptide occupies residues 1 to 21; sequence MSNQVLCCVVLCLLGANTVDG. One can recognise an Ig-like domain in the interval 22–114; it reads GITQSPKYLF…TAFYLCASSI (93 aa). Residue asparagine 37 is glycosylated (N-linked (GlcNAc...) asparagine). Cysteine 42 and cysteine 110 are joined by a disulfide.

In terms of assembly, alpha-beta TR is a heterodimer composed of an alpha and beta chain; disulfide-linked. The alpha-beta TR is associated with the transmembrane signaling CD3 coreceptor proteins to form the TR-CD3 (TcR or TCR). The assembly of alpha-beta TR heterodimers with CD3 occurs in the endoplasmic reticulum where a single alpha-beta TR heterodimer associates with one CD3D-CD3E heterodimer, one CD3G-CD3E heterodimer and one CD247 homodimer forming a stable octameric structure. CD3D-CD3E and CD3G-CD3E heterodimers preferentially associate with TR alpha and TR beta chains, respectively. The association of the CD247 homodimer is the last step of TcR assembly in the endoplasmic reticulum and is required for transport to the cell surface. (Microbial infection) Interacts with Staphylococcus aureus enterotoxin type B/SEB.

The protein resides in the cell membrane. Its function is as follows. V region of the variable domain of T cell receptor (TR) beta chain that participates in the antigen recognition. Alpha-beta T cell receptors are antigen specific receptors which are essential to the immune response and are present on the cell surface of T lymphocytes. Recognize peptide-major histocompatibility (MH) (pMH) complexes that are displayed by antigen presenting cells (APC), a prerequisite for efficient T cell adaptive immunity against pathogens. Binding of alpha-beta TR to pMH complex initiates TR-CD3 clustering on the cell surface and intracellular activation of LCK that phosphorylates the ITAM motifs of CD3G, CD3D, CD3E and CD247 enabling the recruitment of ZAP70. In turn ZAP70 phosphorylates LAT, which recruits numerous signaling molecules to form the LAT signalosome. The LAT signalosome propagates signal branching to three major signaling pathways, the calcium, the mitogen-activated protein kinase (MAPK) kinase and the nuclear factor NF-kappa-B (NF-kB) pathways, leading to the mobilization of transcription factors that are critical for gene expression and essential for T cell growth and differentiation. The T cell repertoire is generated in the thymus, by V-(D)-J rearrangement. This repertoire is then shaped by intrathymic selection events to generate a peripheral T cell pool of self-MH restricted, non-autoaggressive T cells. Post-thymic interaction of alpha-beta TR with the pMH complexes shapes TR structural and functional avidity. The polypeptide is T cell receptor beta variable 19 (Homo sapiens (Human)).